The primary structure comprises 320 residues: 1-aminocyclopropane-1-carboxylate oxidase 2 (320 aa).

Residues 111–143 (DEYRTAMKDFGKRLENLAEDLLDLLCENLGLEK) adopt a coiled-coil conformation. Positions 156–256 (PTFGTKVSNY…RMSVASFYNP (101 aa)) constitute a Fe2OG dioxygenase domain. The Fe cation site is built by His-180, Asp-182, and His-237. Arg-247 contributes to the 2-oxoglutarate binding site.

This sequence belongs to the iron/ascorbate-dependent oxidoreductase family. Fe(2+) is required as a cofactor. The cofactor is Cu(2+). In terms of tissue distribution, expressed in vegetative tissues. Constitutively expressed in leaves and blades. In ethylene exposed etiolated seedlings, localized in cells at the outer side of the exaggerated hook in an ethylene-dependent manner and following an ethylene sensitive pattern. Also detected in the root tip when treated by ethylene.

It carries out the reaction 1-aminocyclopropane-1-carboxylate + L-ascorbate + O2 = ethene + L-dehydroascorbate + hydrogen cyanide + CO2 + 2 H2O. The protein operates within alkene biosynthesis; ethylene biosynthesis via S-adenosyl-L-methionine; ethylene from S-adenosyl-L-methionine: step 2/2. Its function is as follows. Enzyme involved in the ethylene biosynthesis. Required to mediate the 1-aminocyclopropane-1-carboxylic acid (ACC)-mediated reversion of the ABA-induced inhibition of seed germination via endosperm rupture. May promote stem elongation by maximizing the extensibility cells, possibly by activating ethylene biosynthesis, in response to very-long-chain fatty acids (VLCFAs C20:0 to C30:0). The sequence is that of 1-aminocyclopropane-1-carboxylate oxidase 2 (ACO2) from Arabidopsis thaliana (Mouse-ear cress).